Reading from the N-terminus, the 208-residue chain is 2,3-bisphosphoglycerate-dependent phosphoglycerate mutase (208 aa).

Residues 9-16 (RHGQSEWN), 22-23 (TG), Arg61, 88-91 (ERDY), Lys99, 115-116 (RR), and 159-160 (GN) each bind substrate. Catalysis depends on His10, which acts as the Tele-phosphohistidine intermediate. The active-site Proton donor/acceptor is the Glu88.

This sequence belongs to the phosphoglycerate mutase family. BPG-dependent PGAM subfamily. In terms of assembly, homodimer.

It catalyses the reaction (2R)-2-phosphoglycerate = (2R)-3-phosphoglycerate. Its pathway is carbohydrate degradation; glycolysis; pyruvate from D-glyceraldehyde 3-phosphate: step 3/5. Catalyzes the interconversion of 2-phosphoglycerate and 3-phosphoglycerate. This Methylobacterium sp. (strain 4-46) protein is 2,3-bisphosphoglycerate-dependent phosphoglycerate mutase.